Reading from the N-terminus, the 180-residue chain is MPENKIRSTTILCVRKNGKVAIGGDGQVSMGNTVMKNTAKKIRRLYDGKILSGFAGSAADAFTLFELFEKKVQEFGGSLSRSAVELAREWRTDRMLRRLEALLIVADKEESFLISGTGDVISPDEGVIAIGSGGNYALAAARALYDHTNLSPKEIVESSMKIAADICIYTNNHITLEEIL.

The active site involves T9. Na(+) is bound by residues A164, C167, and T170.

Belongs to the peptidase T1B family. HslV subfamily. As to quaternary structure, a double ring-shaped homohexamer of HslV is capped on each side by a ring-shaped HslU homohexamer. The assembly of the HslU/HslV complex is dependent on binding of ATP.

The protein resides in the cytoplasm. It catalyses the reaction ATP-dependent cleavage of peptide bonds with broad specificity.. With respect to regulation, allosterically activated by HslU binding. In terms of biological role, protease subunit of a proteasome-like degradation complex believed to be a general protein degrading machinery. In Leptospira interrogans serogroup Icterohaemorrhagiae serovar Lai (strain 56601), this protein is ATP-dependent protease subunit HslV.